The following is a 1700-amino-acid chain: MELSCSEVPLYGQKTVYAKFGKNVYLPEDAEFYFVYGGSHQRHVVIADRVQDNVLQSSIPGHWLQETVTVSVCLCSEGYSPVTMGSGSVTYVDNMACRLARLLVTQADRLTACSHQTLLTPFALTVEALPALDEELVLALTQLELPLGWTVLGNSSLEVSLHRESLLHLAVRWALPKLFHFLLCLPGGVKALKLPNEEATTPLDLALQGGHSTLVEDITNFQGSHSPGFSRLRLNEEATLQFVHSSETLTLTVNHTAEHLLEADIKLFRKYFWDRAFLVKALEQEAKTEKATMPSGAAETEEEVRNLESGRSPSEEEEDAKSIKSQVDGPSEHEDQDRLPLDRSFDGLKKSKHVPASLAAGQLSDVLNGGDEVYANCMVIDQVGDLDINYINLEGLSTHTSPESGRSMLGPQACMHTLPPDTSPCGRPLIENSEGTLDAAASQSFVTPSSSRTSNLNLSFGLHGFEKEQSHLKKRSSSLDALVADSEGEGGSEPPICYAVGSQSSPRTGLPSGDELDSFETNTEPDCNISRTESLSLSSTLHSKESLLSGIRSRSYSCSSPKISSGKSRLVRDFTVCSTSEEQRSYSFQEPPGEKRIQEEEWDEYVIPAKSESEKYKVSRTFSFLMNRMTSPRNKSKMKNKDTKEKEKMNRHQFVPGTFSGVLQCSGCDKTLLGKESLQCANCKANTHKGCKDAVPPCTKKFQEKYNKNKPQSILGSSSVRDVPAPGLSLHPSSSMPIGLPAGRKEFAAQVHPLSRSVPGTTLESFRRAVTSLESEGDSWRSRSHSDELFQSMGSSPSTESFMMEDVVDSSLWIDLSSDAQEFEAESWSLVVDPSFCSRQEKDVIKRQDVIFELMQTEVHHIQTLLIMSEVFRKGMKEELQLDHSTVDKIFPCLDELLETHRHFFFSMKERRQESCAGSDRNFVINQIGDILVQQFSEENASKMKRIYGEFCSHHKEAMSLFKELQQNKKFQNFIKIRNSNLLARRRGIPECILLVTQRITKYPVLVERILQYTKERTEEHRDLCKALGLIKDMIAAVDLKVSEYEKNQKWLEILNKIENKTYTKLKNGHVFRKQALLSQERALLHDGLVYWKTATGRFKDILALLLTDVLLFLQEKDQKYIFAAVDQKPSVISLQKLIAREVANEERGMFLISASSAGPEMYEIHTNSKEERNNWMRRIQQAVESCPEEEGGRTSESDEERRKAEARVAKIQQCQEILSNQDQQICTYLEEKLHIYAELGELSGFEDVHLEPHLLIKPDPGEPPQAASLLAAALREAESLQVAVKASKMGDVSQSSEESPGGTVLMDTPSTQDVPASPTASLVTEGTEGRGCWDVDPGLQGVVTDLAVSDAGEKVEYRSFSGSSQSEIIQAIQNLTRLLYSLQAALTIQDSHIEIHKLVLQQRESLAPSHSFRGGPLQDQEKSRYLEKQREELANIHKLQHQFQQEQRRWHRTCDQQQREQEAQESWLQARERECQSQEELLLRHRSELDHQLQEYQQSLERLREGQRMVERERQKMRVQQGLLGHCKHSRQRSLPAVFSPGSKEVTELNRAESLCHENSFFINEAFGHMSLNTSNKPNPSGVPWDAHPLEGSHFDLARTSESPTELKIDISQPPDVNSELWTTGPGHQRPALQENSKESYKNVADLDSFQSESSSPQDSNQRGPQPQTLTTEAKLSLPMAAGHGGDAGDGAEENILYL.

Positions threonine 288–arginine 343 are disordered. A phosphoserine mark is found at serine 312 and serine 314. Positions proline 330–arginine 343 are enriched in basic and acidic residues. Serine 478 is modified (phosphoserine). The disordered stretch occupies residues valine 483–threonine 532. The residue at position 623 (serine 623) is a Phosphoserine. A Phorbol-ester/DAG-type zinc finger spans residues arginine 651–cysteine 698. The DH domain maps to lysine 846–lysine 1041. The region spanning alanine 1095–valine 1184 is the PH domain. Disordered regions lie at residues valine 1184–alanine 1205 and lysine 1289–threonine 1328. Residues glutamate 1191–alanine 1205 are compositionally biased toward basic and acidic residues. Residues aspartate 1292–proline 1301 form an interaction with PTK2/FAK1; required for regulation of axonal branching and synapse formation region. A compositionally biased stretch (polar residues) spans threonine 1309 to threonine 1325. A mediates cytoplasmic retention and interaction with YWHAH region spans residues isoleucine 1369–leucine 1380. Residues glutamine 1421 to glutamine 1522 are a coiled coil. The interval glutamine 1421–leucine 1700 is interaction with microtubules. The interval glutamine 1493–leucine 1524 is RNA-binding. A Phosphoserine modification is found at serine 1535. Positions phenylalanine 1563–serine 1576 are mediates cytoplasmic retention and interaction with MAPK8IP1. Residues serine 1602 to leucine 1700 are disordered. Serine 1604 carries the post-translational modification Phosphoserine. Over residues aspartate 1647–glutamine 1663 the composition is skewed to low complexity. Residues arginine 1664 to alanine 1675 are compositionally biased toward polar residues.

Homooligomer; forms some cytoplasmic aggregates. Forms a complex with MAPK8 and MAPK8IP1. Interacts with RHOA. Interacts with microtubules. Interacts with YWHAE and YWHAH. Interacts with PTK2/FAK1. Interacts with NEFL. Interacts with CTNND2; prevents interaction with RHOA. Post-translationally, phosphorylated on tyrosine upon stimulation of cells by laminin. In terms of tissue distribution, highly enriched in the brain (at protein level). Also detected in lung and kidney.

The protein resides in the cytoplasm. It localises to the cell membrane. Functions as a RHOA-specific guanine nucleotide exchange factor regulating signaling pathways downstream of integrins and growth factor receptors. Functions in axonal branching, synapse formation and dendritic morphogenesis. Also functions in focal adhesion formation, cell motility and B-lymphocytes activation. May regulate NEFL expression and aggregation and play a role in apoptosis. This chain is Rho guanine nucleotide exchange factor 28 (Arhgef28), found in Mus musculus (Mouse).